Consider the following 211-residue polypeptide: Thiamine-phosphate synthase (211 aa).

4-amino-2-methyl-5-(diphosphooxymethyl)pyrimidine is bound by residues 37–41 and Asn-69; that span reads QLRIK. Mg(2+) contacts are provided by Asp-70 and Asp-89. Ser-108 lines the 4-amino-2-methyl-5-(diphosphooxymethyl)pyrimidine pocket. 134–136 contacts 2-[(2R,5Z)-2-carboxy-4-methylthiazol-5(2H)-ylidene]ethyl phosphate; that stretch reads TQT. A 4-amino-2-methyl-5-(diphosphooxymethyl)pyrimidine-binding site is contributed by Lys-137. 2-[(2R,5Z)-2-carboxy-4-methylthiazol-5(2H)-ylidene]ethyl phosphate contacts are provided by residues Gly-166 and 186-187; that span reads VS.

Belongs to the thiamine-phosphate synthase family. It depends on Mg(2+) as a cofactor.

It catalyses the reaction 2-[(2R,5Z)-2-carboxy-4-methylthiazol-5(2H)-ylidene]ethyl phosphate + 4-amino-2-methyl-5-(diphosphooxymethyl)pyrimidine + 2 H(+) = thiamine phosphate + CO2 + diphosphate. The catalysed reaction is 2-(2-carboxy-4-methylthiazol-5-yl)ethyl phosphate + 4-amino-2-methyl-5-(diphosphooxymethyl)pyrimidine + 2 H(+) = thiamine phosphate + CO2 + diphosphate. The enzyme catalyses 4-methyl-5-(2-phosphooxyethyl)-thiazole + 4-amino-2-methyl-5-(diphosphooxymethyl)pyrimidine + H(+) = thiamine phosphate + diphosphate. The protein operates within cofactor biosynthesis; thiamine diphosphate biosynthesis; thiamine phosphate from 4-amino-2-methyl-5-diphosphomethylpyrimidine and 4-methyl-5-(2-phosphoethyl)-thiazole: step 1/1. Functionally, condenses 4-methyl-5-(beta-hydroxyethyl)thiazole monophosphate (THZ-P) and 2-methyl-4-amino-5-hydroxymethyl pyrimidine pyrophosphate (HMP-PP) to form thiamine monophosphate (TMP). The chain is Thiamine-phosphate synthase from Shigella dysenteriae serotype 1 (strain Sd197).